Consider the following 96-residue polypeptide: Co-chaperonin GroES (96 aa).

The protein belongs to the GroES chaperonin family. In terms of assembly, heptamer of 7 subunits arranged in a ring. Interacts with the chaperonin GroEL.

Its subcellular location is the cytoplasm. Together with the chaperonin GroEL, plays an essential role in assisting protein folding. The GroEL-GroES system forms a nano-cage that allows encapsulation of the non-native substrate proteins and provides a physical environment optimized to promote and accelerate protein folding. GroES binds to the apical surface of the GroEL ring, thereby capping the opening of the GroEL channel. The protein is Co-chaperonin GroES of Shewanella baltica (strain OS223).